Here is a 152-residue protein sequence, read N- to C-terminus: MTTLRLESLKANKGARRRKLRKGRGIAAGQGASCGFGMRGQKSRSGRPTRPGFEGGQMPLYRRVPKLKHFPLVNPKHFTVLNVSALNSLKDGSTVNLDSLVKDGVVTSPKHPLKILGNGDLTAKKLTVQAAAFTASARTKIEAAGGSCETLD.

The tract at residues 31-58 (GASCGFGMRGQKSRSGRPTRPGFEGGQM) is disordered.

This sequence belongs to the universal ribosomal protein uL15 family. As to quaternary structure, part of the 50S ribosomal subunit.

Its function is as follows. Binds to the 23S rRNA. The chain is Large ribosomal subunit protein uL15 from Parasynechococcus marenigrum (strain WH8102).